Reading from the N-terminus, the 420-residue chain is Hemocyanin 2-c chain (420 aa).

Residues 1-12 (DFGHSKKIRKNV) show a composition bias toward basic residues. The interval 1–20 (DFGHSKKIRKNVHSLTAEEQ) is disordered. His46 is a Cu cation binding site. Cys52 and Cys63 are joined by a disulfide. Cu cation-binding residues include His66, His73, His185, His189, and His216. Cystine bridges form between Cys175–Cys242 and Cys335–Cys342.

Post-translationally, O-glycosylated. Hemolymph.

It localises to the secreted. It is found in the extracellular space. Hemocyanins are copper-containing oxygen carriers occurring freely dissolved in the hemolymph of many mollusks and arthropods. The protein is Hemocyanin 2-c chain of Megathura crenulata (Giant keyhole limpet).